The following is a 179-amino-acid chain: Large ribosomal subunit protein uL5 (179 aa).

This sequence belongs to the universal ribosomal protein uL5 family. As to quaternary structure, part of the 50S ribosomal subunit; part of the 5S rRNA/L5/L18/L25 subcomplex. Contacts the 5S rRNA and the P site tRNA. Forms a bridge to the 30S subunit in the 70S ribosome.

Functionally, this is one of the proteins that bind and probably mediate the attachment of the 5S RNA into the large ribosomal subunit, where it forms part of the central protuberance. In the 70S ribosome it contacts protein S13 of the 30S subunit (bridge B1b), connecting the 2 subunits; this bridge is implicated in subunit movement. Contacts the P site tRNA; the 5S rRNA and some of its associated proteins might help stabilize positioning of ribosome-bound tRNAs. The sequence is that of Large ribosomal subunit protein uL5 from Burkholderia multivorans (strain ATCC 17616 / 249).